Here is a 243-residue protein sequence, read N- to C-terminus: Terpene cyclase atmB (243 aa).

7 helical membrane-spanning segments follow: residues 19–39 (IADV…VGMV), 48–68 (YGMA…YGLI), 78–98 (GVFL…IKFG), 112–132 (LPLI…ALAA), 134–154 (IGPA…LSVG), 169–189 (SYTL…SAWL), and 205–225 (LILW…VCFY).

It belongs to the paxB family.

The protein resides in the membrane. In terms of biological role, terpene cyclase; part of the ATM2 gene cluster that mediates the biosynthesis of aflatrem, a tremorgenic mycotoxin with acute neurotoxic effects. Synthesis of geranylgeranyl diphosphate (GGPP) by AtmG (a GGPP synthase) precedes condensation of GGPP with indole 3-glycerol phosphate, followed by epoxidation and cyclization by AtmM (a FAD-dependent monooxygenase) and AtmC (a prenyltransferase) to produce paspaline. AtmB is also essential for paspaline production, but its exact role has not been identified yet. AtmP, a cytochrome P450 monooxygenase, subsequently converts paspaline to 13-desoxypaxilline via PC-M6 by removal of the C-30 methyl group and oxidation at C-10. AtmQ, a cytochrome P450 monooxygenase, then catalyzes the oxidation of 13-desoxypaxilline, first at C-7 to produce paspalicine and then at C-13 to form paspalinine. Finally, AtmD prenylates paspalinine to form aflatrem. The chain is Terpene cyclase atmB from Aspergillus flavus.